The primary structure comprises 213 residues: 3-isopropylmalate dehydratase small subunit (213 aa).

The protein belongs to the LeuD family. LeuD type 1 subfamily. Heterodimer of LeuC and LeuD.

It catalyses the reaction (2R,3S)-3-isopropylmalate = (2S)-2-isopropylmalate. Its pathway is amino-acid biosynthesis; L-leucine biosynthesis; L-leucine from 3-methyl-2-oxobutanoate: step 2/4. Its function is as follows. Catalyzes the isomerization between 2-isopropylmalate and 3-isopropylmalate, via the formation of 2-isopropylmaleate. This is 3-isopropylmalate dehydratase small subunit from Neisseria gonorrhoeae (strain ATCC 700825 / FA 1090).